Here is a 222-residue protein sequence, read N- to C-terminus: MKLLIVEDDKLLQEGLLLALSHEGYACDCAGTAKEADALIGSAHYSLVILDLGLPDDDGLALLSRWRKNNYQHPVLILTARDKVDDRVSGLDVGADDYLAKPFALTELQARVRALIRRNQGSSNSKIQVDNITLDLNNQQVLLDEKPVVLTPKEFAILSRLVLKAGYQVHRELLHQDIYAWNDDPSSNSLEVHIHNLRQKIGKDRIRTLRGFGYLLTKGEQP.

The region spanning 2–116 (KLLIVEDDKL…ELQARVRALI (115 aa)) is the Response regulatory domain. D51 bears the 4-aspartylphosphate mark. A DNA-binding region (ompR/PhoB-type) is located at residues 124-218 (NSKIQVDNIT…LRGFGYLLTK (95 aa)).

In terms of processing, phosphorylated by PmrB.

Its subcellular location is the cytoplasm. In terms of biological role, member of the two-component regulatory system PmrB/PmrA involved in regulation of virulence. Unphosphorylated PmrA represses extracellular enzyme genes. Phosphorylation of PmrA by PmrB relieves such repression, which leads to activation of extracellular enzyme genes. Phosphorylated PmrA seems to repress expression of the pmrCAB operon. The polypeptide is Transcriptional regulatory protein PmrA (pmrA) (Pectobacterium parmentieri).